The following is a 351-amino-acid chain: Biotin synthase (351 aa).

The Radical SAM core domain maps to 44 to 262 (NRVQVSTLLS…LAVARILMPQ (219 aa)). Cys-59, Cys-63, and Cys-66 together coordinate [4Fe-4S] cluster. Residues Cys-103, Cys-134, Cys-194, and Arg-266 each contribute to the [2Fe-2S] cluster site.

The protein belongs to the radical SAM superfamily. Biotin synthase family. In terms of assembly, homodimer. [4Fe-4S] cluster serves as cofactor. It depends on [2Fe-2S] cluster as a cofactor.

It catalyses the reaction (4R,5S)-dethiobiotin + (sulfur carrier)-SH + 2 reduced [2Fe-2S]-[ferredoxin] + 2 S-adenosyl-L-methionine = (sulfur carrier)-H + biotin + 2 5'-deoxyadenosine + 2 L-methionine + 2 oxidized [2Fe-2S]-[ferredoxin]. Its pathway is cofactor biosynthesis; biotin biosynthesis; biotin from 7,8-diaminononanoate: step 2/2. Its function is as follows. Catalyzes the conversion of dethiobiotin (DTB) to biotin by the insertion of a sulfur atom into dethiobiotin via a radical-based mechanism. This is Biotin synthase from Pseudomonas fluorescens (strain ATCC BAA-477 / NRRL B-23932 / Pf-5).